The following is a 166-amino-acid chain: Ribosomal RNA large subunit methyltransferase H (166 aa).

Residues Leu85, Gly116, and 135-140 (ISKMTF) each bind S-adenosyl-L-methionine.

The protein belongs to the RNA methyltransferase RlmH family. Homodimer.

The protein localises to the cytoplasm. The enzyme catalyses pseudouridine(1915) in 23S rRNA + S-adenosyl-L-methionine = N(3)-methylpseudouridine(1915) in 23S rRNA + S-adenosyl-L-homocysteine + H(+). Specifically methylates the pseudouridine at position 1915 (m3Psi1915) in 23S rRNA. The sequence is that of Ribosomal RNA large subunit methyltransferase H from Francisella tularensis subsp. holarctica (strain FTNF002-00 / FTA).